Here is a 192-residue protein sequence, read N- to C-terminus: MAVVKSSEIEKGSFLLIKGTPHIVLEREFSKTGRGGAIVRLKLKNLKNKFVIRETLKGADTAEAIEIYEVSAQYLYKDKDVLVFMDLETYDQVSLDLKESANFQDKVPFLQESETYALIMFDNVVIDIKLAPKIAFEVVEVEAAVKGDTVTNAMKNITLNTGLVVKAPLFINVGDKVLVNSETKEYAERIKS.

This sequence belongs to the elongation factor P family.

It is found in the cytoplasm. It participates in protein biosynthesis; polypeptide chain elongation. Functionally, involved in peptide bond synthesis. Stimulates efficient translation and peptide-bond synthesis on native or reconstituted 70S ribosomes in vitro. Probably functions indirectly by altering the affinity of the ribosome for aminoacyl-tRNA, thus increasing their reactivity as acceptors for peptidyl transferase. In Borrelia garinii subsp. bavariensis (strain ATCC BAA-2496 / DSM 23469 / PBi) (Borreliella bavariensis), this protein is Elongation factor P.